The following is a 96-amino-acid chain: Large ribosomal subunit protein bL25 (96 aa).

This sequence belongs to the bacterial ribosomal protein bL25 family. As to quaternary structure, part of the 50S ribosomal subunit; part of the 5S rRNA/L5/L18/L25 subcomplex. Contacts the 5S rRNA. Binds to the 5S rRNA independently of L5 and L18.

Functionally, this is one of the proteins that binds to the 5S RNA in the ribosome where it forms part of the central protuberance. The polypeptide is Large ribosomal subunit protein bL25 (Francisella tularensis subsp. holarctica (strain FTNF002-00 / FTA)).